The following is a 321-amino-acid chain: Probable arabinan endo-1,5-alpha-L-arabinosidase C (321 aa).

An N-terminal signal peptide occupies residues 1–20; the sequence is MYLYTLILLFLASVNVNAYA. Residue D33 is the Proton acceptor of the active site. 2 N-linked (GlcNAc...) asparagine glycosylation sites follow: N75 and N192. The active-site Proton donor is E200. N224 carries N-linked (GlcNAc...) asparagine glycosylation.

The protein belongs to the glycosyl hydrolase 43 family.

The protein resides in the secreted. The catalysed reaction is Endohydrolysis of (1-&gt;5)-alpha-arabinofuranosidic linkages in (1-&gt;5)-arabinans.. Its pathway is glycan metabolism; L-arabinan degradation. In terms of biological role, endo-1,5-alpha-L-arabinanase involved in degradation of pectin. Its preferred substrate is linear 1,5-alpha-L-arabinan. In Neosartorya fischeri (strain ATCC 1020 / DSM 3700 / CBS 544.65 / FGSC A1164 / JCM 1740 / NRRL 181 / WB 181) (Aspergillus fischerianus), this protein is Probable arabinan endo-1,5-alpha-L-arabinosidase C (abnC).